A 305-amino-acid chain; its full sequence is Aspartate carbamoyltransferase catalytic subunit (305 aa).

The carbamoyl phosphate site is built by R56 and T57. K85 contributes to the L-aspartate binding site. Carbamoyl phosphate contacts are provided by R106, H134, and Q137. L-aspartate-binding residues include R167 and R227. Carbamoyl phosphate contacts are provided by L266 and P267.

Belongs to the aspartate/ornithine carbamoyltransferase superfamily. ATCase family. Heterooligomer of catalytic and regulatory chains.

It carries out the reaction carbamoyl phosphate + L-aspartate = N-carbamoyl-L-aspartate + phosphate + H(+). It participates in pyrimidine metabolism; UMP biosynthesis via de novo pathway; (S)-dihydroorotate from bicarbonate: step 2/3. Its function is as follows. Catalyzes the condensation of carbamoyl phosphate and aspartate to form carbamoyl aspartate and inorganic phosphate, the committed step in the de novo pyrimidine nucleotide biosynthesis pathway. The chain is Aspartate carbamoyltransferase catalytic subunit from Thermoplasma volcanium (strain ATCC 51530 / DSM 4299 / JCM 9571 / NBRC 15438 / GSS1).